The primary structure comprises 1066 residues: Coiled-coil domain-containing protein 73 (1066 aa).

Coiled coils occupy residues 47-134 (KAET…QVSQ) and 178-391 (LVRE…KTEE). 5 disordered regions span residues 568 to 600 (LDTRSNKASSNGMSNEMAHKRNYNTDGSESNPF), 719 to 811 (SENS…PKSG), 854 to 883 (LSPATPSADSVSTSARSAFDLPSPDKPEKT), 944 to 978 (KNIESDPTSNSRAADTMSNWSIHLDPKGQPREERN), and 1003 to 1027 (VQQSHSQTVKVTDSPDPLTFSPGNN). Composition is skewed to polar residues over residues 591 to 600 (NTDGSESNPF), 742 to 781 (RTNTNDIQNSSLRNHLGASESSVSVSDFQVNQGDSHTSQA), 789 to 811 (PLTTSSEKQPPSESQITETPKSG), 857 to 869 (ATPSADSVSTSAR), and 948 to 964 (SDPTSNSRAADTMSNWS). Residues 967–978 (LDPKGQPREERN) show a composition bias toward basic and acidic residues. Residues 1003–1013 (VQQSHSQTVKV) are compositionally biased toward polar residues.

This chain is Coiled-coil domain-containing protein 73 (Ccdc73), found in Mus musculus (Mouse).